The following is a 1813-amino-acid chain: Sucrase-isomaltase, intestinal (1813 aa).

Residues 1–12 lie on the Cytoplasmic side of the membrane; the sequence is MARKKSSGLKIT. The residue at position 7 (S7) is a Phosphoserine; by PKA. The chain crosses the membrane as a helical; Signal-anchor for type II membrane protein span at residues 13–32; the sequence is LIVLLAIVTIIAIALVAILP. At 33–1813 the chain is on the lumenal side; the sequence is TKTPAVELVS…LDEPIEISWT (1781 aa). The P-type 1 domain maps to 46–95; the sequence is GKCPSAENDRLDEKINCIPDQFPTQALCAMQGCCWNPRNESPTPWCSFAN. 3 disulfide bridges follow: C48/C79, C62/C78, and C73/C91. The segment at 95 to 991 is isomaltase; it reads NNHGYEFEKI…DLELNTATAR (897 aa). N127 is a glycosylation site (N-linked (GlcNAc...) asparagine). Substrate-binding residues include D250 and D374. Y377 carries the sulfotyrosine modification. N388 is a glycosylation site (N-linked (GlcNAc...) asparagine). D491 (nucleophile; for isomaltase activity) is an active-site residue. A disulfide bridge links C506 with C531. Residue R574 coordinates substrate. Residue D590 is the For isomaltase activity of the active site. A disulfide bridge connects residues C621 and C632. H648 contributes to the substrate binding site. N669, N791, N896, and N911 each carry an N-linked (GlcNAc...) asparagine glycan. In terms of domain architecture, P-type 2 spans 917–962; that stretch reads NQVSLDSEKIDCFPDNNPENKQNCEERGCLWEPNSAAEGPRCYFPK. The interval 992–1813 is sucrase; the sequence is IKMPSNPISV…LDEPIEISWT (822 aa). N-linked (GlcNAc...) asparagine glycosylation is found at N1221 and N1289. The residue at position 1294 (Y1294) is a Sulfotyrosine. 2 N-linked (GlcNAc...) asparagine glycosylation sites follow: N1326 and N1340. 2 positions are modified to sulfotyrosine: Y1368 and Y1371. D1380 (nucleophile; for sucrase activity) is an active-site residue. E1383 functions as the For sucrase activity in the catalytic mechanism. N-linked (GlcNAc...) asparagine glycosylation is present at N1432. D1486 serves as the catalytic Proton donor; for sucrase activity. Residues N1521, N1545, N1558, N1703, and N1772 are each glycosylated (N-linked (GlcNAc...) asparagine).

Belongs to the glycosyl hydrolase 31 family. As to quaternary structure, the resulting sucrase and isomaltase subunits stay associated with one another in a complex by non-covalent linkages. Post-translationally, the precursor is proteolytically cleaved when exposed to pancreatic proteases in the intestinal lumen. In terms of processing, sulfated.

Its subcellular location is the apical cell membrane. The catalysed reaction is Hydrolysis of sucrose and maltose by an alpha-D-glucosidase-type action.. The enzyme catalyses Hydrolysis of (1-&gt;6)-alpha-D-glucosidic linkages in some oligosaccharides produced from starch and glycogen by alpha-amylase, and in isomaltose.. Functionally, plays an important role in the final stage of carbohydrate digestion. Isomaltase activity is specific for both alpha-1,4- and alpha-1,6-oligosaccharides. The protein is Sucrase-isomaltase, intestinal (SI) of Suncus murinus (Asian house shrew).